The primary structure comprises 320 residues: Ferrochelatase (320 aa).

Positions 194 and 275 each coordinate Fe cation.

The protein belongs to the ferrochelatase family.

It is found in the cytoplasm. It catalyses the reaction heme b + 2 H(+) = protoporphyrin IX + Fe(2+). Its pathway is porphyrin-containing compound metabolism; protoheme biosynthesis; protoheme from protoporphyrin-IX: step 1/1. Catalyzes the ferrous insertion into protoporphyrin IX. The polypeptide is Ferrochelatase (Xylella fastidiosa (strain 9a5c)).